Reading from the N-terminus, the 534-residue chain is Phosphoenolpyruvate carboxykinase (ATP) (534 aa).

Substrate-binding residues include Arg-58, Tyr-194, and Lys-200. ATP-binding positions include Lys-200, His-219, and 235–243; that span reads GLSGTGKTT. 2 residues coordinate Mn(2+): Lys-200 and His-219. A Mn(2+)-binding site is contributed by Asp-256. 3 residues coordinate ATP: Glu-284, Arg-322, and Thr-449. Arg-322 contacts substrate.

This sequence belongs to the phosphoenolpyruvate carboxykinase (ATP) family. It depends on Mn(2+) as a cofactor.

The protein localises to the cytoplasm. It catalyses the reaction oxaloacetate + ATP = phosphoenolpyruvate + ADP + CO2. It participates in carbohydrate biosynthesis; gluconeogenesis. Involved in the gluconeogenesis. Catalyzes the conversion of oxaloacetate (OAA) to phosphoenolpyruvate (PEP) through direct phosphoryl transfer between the nucleoside triphosphate and OAA. The chain is Phosphoenolpyruvate carboxykinase (ATP) from Novosphingobium aromaticivorans (strain ATCC 700278 / DSM 12444 / CCUG 56034 / CIP 105152 / NBRC 16084 / F199).